A 448-amino-acid polypeptide reads, in one-letter code: Enolase (448 aa).

A (2R)-2-phosphoglycerate-binding site is contributed by Gln164. Glu206 (proton donor) is an active-site residue. Asp243, Glu289, and Asp316 together coordinate Mg(2+). (2R)-2-phosphoglycerate-binding residues include Lys341, Arg370, Ser371, and Lys392. The active-site Proton acceptor is the Lys341.

Belongs to the enolase family. Requires Mg(2+) as cofactor.

It localises to the cytoplasm. It is found in the secreted. Its subcellular location is the cell surface. The enzyme catalyses (2R)-2-phosphoglycerate = phosphoenolpyruvate + H2O. The protein operates within carbohydrate degradation; glycolysis; pyruvate from D-glyceraldehyde 3-phosphate: step 4/5. Functionally, catalyzes the reversible conversion of 2-phosphoglycerate (2-PG) into phosphoenolpyruvate (PEP). It is essential for the degradation of carbohydrates via glycolysis. This Oenococcus oeni (strain ATCC BAA-331 / PSU-1) protein is Enolase.